Consider the following 96-residue polypeptide: Protein RnfH (96 aa).

It belongs to the UPF0125 (RnfH) family.

This is Protein RnfH from Escherichia coli O81 (strain ED1a).